Here is a 137-residue protein sequence, read N- to C-terminus: Protein MesC (137 aa).

The protein is Protein MesC (mesC) of Leuconostoc mesenteroides.